The chain runs to 397 residues: CCA-adding enzyme (397 aa).

Residues Gly27 and Arg30 each contribute to the ATP site. CTP is bound by residues Gly27 and Arg30. Residues Asp40 and Asp42 each contribute to the Mg(2+) site. Residues Arg111, Asp154, Arg157, Arg160, and Arg163 each contribute to the ATP site. Residues Arg111, Asp154, Arg157, Arg160, and Arg163 each coordinate CTP.

Belongs to the tRNA nucleotidyltransferase/poly(A) polymerase family. Bacterial CCA-adding enzyme type 3 subfamily. As to quaternary structure, homodimer. The cofactor is Mg(2+).

It carries out the reaction a tRNA precursor + 2 CTP + ATP = a tRNA with a 3' CCA end + 3 diphosphate. The catalysed reaction is a tRNA with a 3' CCA end + 2 CTP + ATP = a tRNA with a 3' CCACCA end + 3 diphosphate. Catalyzes the addition and repair of the essential 3'-terminal CCA sequence in tRNAs without using a nucleic acid template. Adds these three nucleotides in the order of C, C, and A to the tRNA nucleotide-73, using CTP and ATP as substrates and producing inorganic pyrophosphate. tRNA 3'-terminal CCA addition is required both for tRNA processing and repair. Also involved in tRNA surveillance by mediating tandem CCA addition to generate a CCACCA at the 3' terminus of unstable tRNAs. While stable tRNAs receive only 3'-terminal CCA, unstable tRNAs are marked with CCACCA and rapidly degraded. The sequence is that of CCA-adding enzyme from Anoxybacillus flavithermus (strain DSM 21510 / WK1).